The chain runs to 109 residues: Ubiquitin-related modifier 1 homolog (109 aa).

Residue G109 is modified to 1-thioglycine. A Glycyl lysine isopeptide (Gly-Lys) (interchain with K-? in acceptor proteins) cross-link involves residue G109.

Belongs to the URM1 family. In terms of processing, C-terminal thiocarboxylation occurs in 2 steps, it is first acyl-adenylated (-COAMP) via the hesA/moeB/thiF part of the MOCS3 homolog, then thiocarboxylated (-COSH) via the rhodanese domain of the MOCS3 homolog.

It is found in the cytoplasm. The protein operates within tRNA modification; 5-methoxycarbonylmethyl-2-thiouridine-tRNA biosynthesis. In terms of biological role, acts as a sulfur carrier required for 2-thiolation of mcm(5)S(2)U at tRNA wobble positions of cytosolic tRNA(Lys), tRNA(Glu) and tRNA(Gln). Serves as sulfur donor in tRNA 2-thiolation reaction by being thiocarboxylated (-COSH) at its C-terminus by MOCS3. The sulfur is then transferred to tRNA to form 2-thiolation of mcm(5)S(2)U. Also acts as a ubiquitin-like protein (UBL) that is covalently conjugated via an isopeptide bond to lysine residues of target proteins. The thiocarboxylated form serves as substrate for conjugation and oxidative stress specifically induces the formation of UBL-protein conjugates. The chain is Ubiquitin-related modifier 1 homolog from Bombyx mori (Silk moth).